Consider the following 355-residue polypeptide: Isocitrate dehydrogenase [NAD] subunit gamma, mitochondrial (355 aa).

Position 1 (isoleucine 1) is a transit peptide, mitochondrion. Citrate contacts are provided by threonine 82 and asparagine 95. Substrate contacts are provided by arginine 98, arginine 129, and aspartate 216. A Mn(2+)-binding site is contributed by aspartate 216. ADP is bound by residues asparagine 274, threonine 275, and asparagine 286.

This sequence belongs to the isocitrate and isopropylmalate dehydrogenases family. As to quaternary structure, heterooligomer of subunits alpha (IDH3A), beta (IDH3B), and gamma (IDH3G) in the apparent ratio of 2:1:1. The heterodimer containing one IDH3A and one IDH3B subunit and the heterodimer containing one IDH3A and one IDH3G subunit assemble into a heterotetramer (which contains two subunits of IDH3A, one of IDH3B and one of IDH3G) and further into the heterooctamer. Mg(2+) serves as cofactor. Requires Mn(2+) as cofactor.

Its subcellular location is the mitochondrion. With respect to regulation, the heterotetramer and the heterodimer composed of IDH3A and IDH3G subunits can be allosterically activated by citrate (CIT) or/and ADP, and the two activators can act independently or synergistically. The heterodimer composed of IDH3A and IDH3B subunits cannot be allosterically regulated and the allosteric regulation of the heterotetramer is through the IDH3G subunit and not the IDH3B subunit. The IDH3G subunit contains the allosteric site which consists of a CIT-binding site and an ADP-binding site, and the binding of CIT and ADP causes conformational changes at the allosteric site which are transmitted to the active site in the catalytic subunit (IDH3A) through a cascade of conformational changes at the heterodimer interface, leading to stabilization of the isocitrate-binding at the active site and thus activation of the enzyme. ATP can activate the heterotetramer and the heterodimer composed of IDH3A and IDH3G subunits at low concentrations but inhibits their activities at high concentrations, whereas ATP exhibits only inhibitory effect on the heterodimer composed of IDH3A and IDH3B subunits. In terms of biological role, regulatory subunit which plays a role in the allosteric regulation of the enzyme catalyzing the decarboxylation of isocitrate (ICT) into alpha-ketoglutarate. The heterodimer composed of the alpha (IDH3A) and beta (IDH3B) subunits and the heterodimer composed of the alpha (IDH3A) and gamma (IDH3G) subunits, have considerable basal activity but the full activity of the heterotetramer (containing two subunits of IDH3A, one of IDH3B and one of IDH3G) requires the assembly and cooperative function of both heterodimers. This chain is Isocitrate dehydrogenase [NAD] subunit gamma, mitochondrial (IDH3G), found in Macaca fascicularis (Crab-eating macaque).